The chain runs to 169 residues: Shikimate kinase (169 aa).

13–18 (GAGKST) serves as a coordination point for ATP. Position 17 (Ser17) interacts with Mg(2+). Substrate-binding residues include Asp35, Arg59, and Gly80. Residue Arg117 coordinates ATP. Residue Arg136 participates in substrate binding. Arg153 provides a ligand contact to ATP.

Belongs to the shikimate kinase family. In terms of assembly, monomer. Requires Mg(2+) as cofactor.

It is found in the cytoplasm. The enzyme catalyses shikimate + ATP = 3-phosphoshikimate + ADP + H(+). The protein operates within metabolic intermediate biosynthesis; chorismate biosynthesis; chorismate from D-erythrose 4-phosphate and phosphoenolpyruvate: step 5/7. Its function is as follows. Catalyzes the specific phosphorylation of the 3-hydroxyl group of shikimic acid using ATP as a cosubstrate. The chain is Shikimate kinase from Corynebacterium glutamicum (strain ATCC 13032 / DSM 20300 / JCM 1318 / BCRC 11384 / CCUG 27702 / LMG 3730 / NBRC 12168 / NCIMB 10025 / NRRL B-2784 / 534).